Reading from the N-terminus, the 365-residue chain is Peptide chain release factor 2 (365 aa).

Glutamine 252 carries the N5-methylglutamine modification.

This sequence belongs to the prokaryotic/mitochondrial release factor family. In terms of processing, methylated by PrmC. Methylation increases the termination efficiency of RF2.

The protein localises to the cytoplasm. In terms of biological role, peptide chain release factor 2 directs the termination of translation in response to the peptide chain termination codons UGA and UAA. This is Peptide chain release factor 2 from Klebsiella pneumoniae (strain 342).